The chain runs to 488 residues: Glutamyl-tRNA(Gln) amidotransferase subunit A (488 aa).

Catalysis depends on charge relay system residues Lys77 and Ser152. The active-site Acyl-ester intermediate is the Ser176.

The protein belongs to the amidase family. GatA subfamily. As to quaternary structure, heterotrimer of A, B and C subunits.

It catalyses the reaction L-glutamyl-tRNA(Gln) + L-glutamine + ATP + H2O = L-glutaminyl-tRNA(Gln) + L-glutamate + ADP + phosphate + H(+). Its function is as follows. Allows the formation of correctly charged Gln-tRNA(Gln) through the transamidation of misacylated Glu-tRNA(Gln) in organisms which lack glutaminyl-tRNA synthetase. The reaction takes place in the presence of glutamine and ATP through an activated gamma-phospho-Glu-tRNA(Gln). The polypeptide is Glutamyl-tRNA(Gln) amidotransferase subunit A (Streptococcus pyogenes serotype M12 (strain MGAS2096)).